The following is a 95-amino-acid chain: Ragulator complex protein LAMTOR4 homolog (95 aa).

Belongs to the LAMTOR4 family. As to quaternary structure, part of the Ragulator complex.

It localises to the lysosome. In terms of biological role, regulator of the TOR pathway, a signaling cascade that promotes cell growth in response to growth factors, energy levels, and amino acids. As part of the Ragulator complex, may activate the TOR signaling cascade in response to amino acids. This Nematostella vectensis (Starlet sea anemone) protein is Ragulator complex protein LAMTOR4 homolog.